Consider the following 640-residue polypeptide: Chaperone protein DnaK (640 aa).

A Phosphothreonine; by autocatalysis modification is found at Thr198. The disordered stretch occupies residues 600 to 640; sequence KTQGAGAEGGEQPHGEQEAGGAAKGEKVVDADFEEVKDDKK. A compositionally biased stretch (acidic residues) spans 630 to 640; that stretch reads ADFEEVKDDKK.

This sequence belongs to the heat shock protein 70 family.

Its function is as follows. Acts as a chaperone. The polypeptide is Chaperone protein DnaK (Citrifermentans bemidjiense (strain ATCC BAA-1014 / DSM 16622 / JCM 12645 / Bem) (Geobacter bemidjiensis)).